A 253-amino-acid chain; its full sequence is FGFR1 oncogene partner 2 (253 aa).

A coiled-coil region spans residues Ile-5–Tyr-104. Ser-141 is subject to Phosphoserine. Positions Leu-160–Glu-223 form a coiled coil. Residues Asp-231–Ser-253 form a disordered region. Residues Glu-235–Ser-253 are compositionally biased toward polar residues.

It belongs to the SIKE family. As to expression, expressed in bone marrow, spleen and thymus.

The protein localises to the cytoplasm. Its function is as follows. May be involved in wound healing pathway. The protein is FGFR1 oncogene partner 2 (FGFR1OP2) of Homo sapiens (Human).